The primary structure comprises 454 residues: uncharacterized protein (454 aa).

[4Fe-4S] cluster contacts are provided by C73, C79, C82, and C154. Residues Q279, F307, D328, and D381 each contribute to the S-adenosyl-L-methionine site. C408 functions as the Nucleophile in the catalytic mechanism.

This sequence belongs to the class I-like SAM-binding methyltransferase superfamily. RNA M5U methyltransferase family.

This is an uncharacterized protein from Leptospira interrogans serogroup Icterohaemorrhagiae serovar copenhageni (strain Fiocruz L1-130).